A 214-amino-acid polypeptide reads, in one-letter code: MSSLAGFRNLATKIVCVGRNYKDHALELGNAIPKKPMLFVKTVNSFIVEGEPIVAPPGCQNLHQEVELGVVISKKASRISKSDAMDYIGGYTVALDMTARDFQDEAKKAGAPWFLAKSFDGSCPIGGFLPVSDIPNPHDVELFCKINGKDQQRCRTDVMIFDIPTLLEYTTQFFTLEVGDVVLTGTPAGVTKINSGDVIEFGLTDKLNSKFNVQ.

Positions 65, 67, and 96 each coordinate Mg(2+).

Belongs to the FAH family. It depends on Mg(2+) as a cofactor. Mn(2+) is required as a cofactor. In terms of tissue distribution, widely expressed.

It is found in the mitochondrion. It carries out the reaction oxaloacetate = enol-oxaloacetate. In terms of biological role, tautomerase that converts enol-oxaloacetate, a strong inhibitor of succinate dehydrogenase, to the physiological keto form of oxaloacetate. In Caenorhabditis elegans, this protein is Oxaloacetate tautomerase fahd-1, mitochondrial.